A 556-amino-acid chain; its full sequence is Arginine--tRNA ligase (556 aa).

The 'HIGH' region motif lies at 132–142; the sequence is ANPTGDLHLGH.

This sequence belongs to the class-I aminoacyl-tRNA synthetase family. As to quaternary structure, monomer.

The protein localises to the cytoplasm. The catalysed reaction is tRNA(Arg) + L-arginine + ATP = L-arginyl-tRNA(Arg) + AMP + diphosphate. The protein is Arginine--tRNA ligase of Bacillus velezensis (strain DSM 23117 / BGSC 10A6 / LMG 26770 / FZB42) (Bacillus amyloliquefaciens subsp. plantarum).